Consider the following 136-residue polypeptide: Large ribosomal subunit protein uL16 (136 aa).

The protein belongs to the universal ribosomal protein uL16 family. In terms of assembly, part of the 50S ribosomal subunit.

Functionally, binds 23S rRNA and is also seen to make contacts with the A and possibly P site tRNAs. The polypeptide is Large ribosomal subunit protein uL16 (Vibrio atlanticus (strain LGP32) (Vibrio splendidus (strain Mel32))).